The following is a 344-amino-acid chain: DNA-directed RNA polymerase subunit alpha (344 aa).

The interval 1–232 (MGQYTINLRE…HLFLPPFGLE (232 aa)) is alpha N-terminal domain (alpha-NTD). An alpha C-terminal domain (alpha-CTD) region spans residues 270-344 (LIKDQFLEYS…KRFGINLKLK (75 aa)).

It belongs to the RNA polymerase alpha chain family. As to quaternary structure, in plastids the minimal PEP RNA polymerase catalytic core is composed of four subunits: alpha, beta, beta', and beta''. When a (nuclear-encoded) sigma factor is associated with the core the holoenzyme is formed, which can initiate transcription.

The protein resides in the plastid. It is found in the chloroplast. The enzyme catalyses RNA(n) + a ribonucleoside 5'-triphosphate = RNA(n+1) + diphosphate. Functionally, DNA-dependent RNA polymerase catalyzes the transcription of DNA into RNA using the four ribonucleoside triphosphates as substrates. This chain is DNA-directed RNA polymerase subunit alpha, found in Spirogyra maxima (Green alga).